The sequence spans 89 residues: Protein S100-A8 (89 aa).

2 consecutive EF-hand domains span residues 13–48 (IDVY…FVQN) and 46–81 (VQNI…VGVA). His-17 and His-27 together coordinate Zn(2+). Position 33 (Asp-33) interacts with Ca(2+). Cys-42 is modified (S-nitrosocysteine). Ca(2+) contacts are provided by Asp-59, Asn-61, Asp-63, and Glu-70. A Zn(2+)-binding site is contributed by His-83.

This sequence belongs to the S-100 family. In terms of assembly, homodimer. Preferentially exists as a heterodimer or heterotetramer with S100A9 known as calprotectin (S100A8/A9). Calprotectin (S100A8/9) interacts with CEACAM3 and tubulin filaments in a calcium-dependent manner. Heterotetrameric calprotectin (S100A8/A9) interacts with ANXA6 and associates with tubulin filaments in activated monocytes. S100A8 and calprotectin (S100A8/9) interact with NCF2/P67PHOX, RAC1 and RAC2. Calprotectin (S100A8/9) interacts with CYBA and CYBB. S100A8 interacts with AGER, ATP2A2 and with the heterodimeric complex formed by TLR4 and LY96. Calprotectin (S100A8/9) interacts with NOS2 to form the iNOS-S100A8/A9 transnitrosylase complex. Calprotectin (S100A8/9) interacts with CD69.

The protein resides in the secreted. Its subcellular location is the cytoplasm. It is found in the cytoskeleton. It localises to the cell membrane. Calprotectin (S100A8/A9) activity on TLR4 signaling is inhibited by paquinimod. Its function is as follows. S100A8 is a calcium- and zinc-binding protein which plays a prominent role in the regulation of inflammatory processes and immune response. It can induce neutrophil chemotaxis and adhesion. Predominantly found as calprotectin (S100A8/A9) which has a wide plethora of intra- and extracellular functions. The intracellular functions include: facilitating leukocyte arachidonic acid trafficking and metabolism, modulation of the tubulin-dependent cytoskeleton during migration of phagocytes and activation of the neutrophilic NADPH-oxidase. Also participates in regulatory T-cell differentiation together with CD69. Activates NADPH-oxidase by facilitating the enzyme complex assembly at the cell membrane, transferring arachidonic acid, an essential cofactor, to the enzyme complex and S100A8 contributes to the enzyme assembly by directly binding to NCF2/P67PHOX. The extracellular functions involve pro-inflammatory, antimicrobial, oxidant-scavenging and apoptosis-inducing activities. Its pro-inflammatory activity includes recruitment of leukocytes, promotion of cytokine and chemokine production, and regulation of leukocyte adhesion and migration. Acts as an alarmin or a danger associated molecular pattern (DAMP) molecule and stimulates innate immune cells via binding to pattern recognition receptors such as Toll-like receptor 4 (TLR4) and receptor for advanced glycation endproducts (AGER). Binding to TLR4 and AGER activates the MAP-kinase and NF-kappa-B signaling pathways resulting in the amplification of the pro-inflammatory cascade. Has antimicrobial activity towards bacteria and fungi and exerts its antimicrobial activity probably via chelation of Zn(2+) which is essential for microbial growth. Can induce cell death via autophagy and apoptosis and this occurs through the cross-talk of mitochondria and lysosomes via reactive oxygen species (ROS) and the process involves BNIP3. Can regulate neutrophil number and apoptosis by an anti-apoptotic effect; regulates cell survival via ITGAM/ITGB and TLR4 and a signaling mechanism involving MEK-ERK. Its role as an oxidant scavenger has a protective role in preventing exaggerated tissue damage by scavenging oxidants. The iNOS-S100A8/A9 transnitrosylase complex is proposed to direct selective inflammatory stimulus-dependent S-nitrosylation of multiple targets such as GAPDH, ANXA5, EZR, MSN and VIM by recognizing a [IL]-x-C-x-x-[DE] motif; S100A8 seems to contribute to S-nitrosylation site selectivity. Functionally, (Microbial infection) Upon infection by murine coronavirus (MHV-A59), induces expansion of aberrant immature neutrophils in a TLR4-dependent manner. In Mus musculus (Mouse), this protein is Protein S100-A8.